Consider the following 619-residue polypeptide: Guanylate cyclase soluble subunit beta-1 (619 aa).

Position 105 (His-105) interacts with heme. A Guanylate cyclase domain is found at 421–554 (TILFSGIVGF…NTVNLTSRTE (134 aa)).

The protein belongs to the adenylyl cyclase class-4/guanylyl cyclase family. The active enzyme is formed by a heterodimer of an alpha and a beta subunit. Homotetramer; dimer of dimers (in vitro). Heterodimer with GUCY1A1. Can also form inactive homodimers in vitro. The cofactor is heme. In terms of tissue distribution, lung and brain.

Its subcellular location is the cytoplasm. The catalysed reaction is GTP = 3',5'-cyclic GMP + diphosphate. With respect to regulation, activated by nitric oxide in the presence of magnesium or manganese ions. In terms of biological role, mediates responses to nitric oxide (NO) by catalyzing the biosynthesis of the signaling molecule cGMP. This is Guanylate cyclase soluble subunit beta-1 (Gucy1b1) from Rattus norvegicus (Rat).